A 510-amino-acid chain; its full sequence is Inositol-3-phosphate synthase (510 aa).

NAD(+)-binding residues include G70, G71, N72, N73, D143, I180, Q190, R193, T230, A231, N232, T233, G281, S282, D306, S309, N340, N341, D342, K355, G393, D394, D422, and S423.

Belongs to the myo-inositol 1-phosphate synthase family. NAD(+) serves as cofactor.

Its subcellular location is the cytoplasm. It is found in the cytosol. It localises to the nucleus. The catalysed reaction is D-glucose 6-phosphate = 1D-myo-inositol 3-phosphate. It participates in polyol metabolism; myo-inositol biosynthesis; myo-inositol from D-glucose 6-phosphate: step 1/2. Key enzyme in myo-inositol biosynthesis pathway that catalyzes the conversion of glucose 6-phosphate to 1-myo-inositol 1-phosphate in a NAD-dependent manner. The chain is Inositol-3-phosphate synthase (TUR1) from Spirodela polyrhiza (Giant duckweed).